The following is a 1349-amino-acid chain: Adhesion G protein-coupled receptor F5 (1349 aa).

A signal peptide spans 1–24; it reads MKSSRTVTLYFVLIVICSSEATWS. The Extracellular portion of the chain corresponds to 25-1016; sequence RPAEPIVHPL…PGSLLKILLD (992 aa). N-linked (GlcNAc...) asparagine glycosylation is found at asparagine 73, asparagine 94, asparagine 185, asparagine 254, asparagine 270, asparagine 286, asparagine 299, asparagine 326, asparagine 337, asparagine 349, asparagine 396, asparagine 470, asparagine 503, asparagine 538, asparagine 649, and asparagine 666. The SEA domain maps to 163–271; sequence PETYITLKIK…NSFQGTPSNE (109 aa). 3 consecutive Ig-like domains span residues 268 to 366, 367 to 464, and 469 to 559; these read PSNE…LDVT, PIRI…IAVT, and ANLT…KDVT. The cysteines at positions 291 and 348 are disulfide-linked. Cysteine 389 and cysteine 447 are disulfide-bonded. Cysteine 490 and cysteine 543 are joined by a disulfide. Serine 819 bears the Phosphoserine mark. Residues asparagine 820, asparagine 958, and asparagine 963 are each glycosylated (N-linked (GlcNAc...) asparagine). The region spanning 842–1006 is the GAIN-B domain; sequence TPPFLFHPNV…SILMSPDSPD (165 aa). Intrachain disulfides connect cysteine 954–cysteine 988 and cysteine 973–cysteine 990. Residues 954–1006 are GPS; that stretch reads CVFWNFSLANNTGGWDSSGCTVEDDGRDNRDRVFCKCNHLTSFSILMSPDSPD. The segment at 994–1009 is tethered agonist; that stretch reads TSFSILMSPDSPDPGS. Residues 1017–1036 form a helical membrane-spanning segment; the sequence is IISYIGLGFSIVSLAACLVV. Topologically, residues 1037 to 1055 are cytoplasmic; the sequence is EAMVWKSVTKNRTSYMRHI. Residues 1056-1078 form a helical membrane-spanning segment; the sequence is CIVNIALCLLIADIWFIVAGAIH. At 1079 to 1097 the chain is on the extracellular side; sequence DGHYPLNETACVAATFFIH. Asparagine 1085 is a glycosylation site (N-linked (GlcNAc...) asparagine). The chain crosses the membrane as a helical span at residues 1098 to 1120; that stretch reads FFYLSVFFWMLTLGLMLFYRLIF. Over 1121-1131 the chain is Cytoplasmic; the sequence is ILHDASKSTQK. The helical transmembrane segment at 1132–1154 threads the bilayer; sequence AIAFSLGYGCPLIISSITVGVTQ. Over 1155–1173 the chain is Extracellular; that stretch reads PQEVYMRKNACWLNWEDTR. The chain crosses the membrane as a helical span at residues 1174 to 1196; the sequence is ALLAFAIPALIIVVVNVSITVVV. Residues 1197 to 1216 are Cytoplasmic-facing; that stretch reads ITKILRPSVGDKPGKQEKSS. The chain crosses the membrane as a helical span at residues 1217–1239; sequence LFQISKSIGVLTPLLGLTWGFGL. Topologically, residues 1240-1248 are extracellular; the sequence is ATVIQGSNA. Residues 1249-1271 form a helical membrane-spanning segment; the sequence is VFHIIFTLLNAFQGLFILLFGCL. The Cytoplasmic segment spans residues 1272–1349; sequence WDQKVQEALL…NSSSAYSLLN (78 aa). Threonine 1303 carries the post-translational modification Phosphothreonine. Serine 1310 carries the phosphoserine modification. The span at 1329-1343 shows a compositional bias: low complexity; sequence STPETTSSSVENSSS. The interval 1329-1349 is disordered; that stretch reads STPETTSSSVENSSSAYSLLN.

It belongs to the G-protein coupled receptor 2 family. Adhesion G-protein coupled receptor (ADGR) subfamily. Homodimer; disulfide-linked. Heterodimer of 2 chains generated by proteolytic processing; the large extracellular N-terminal fragment and the membrane-bound C-terminal fragment predominantly remain associated and non-covalently linked. Fragment generates by the processing enzyme furin remains attached to the extracellular N-terminal fragment. Interacts (via N-terminal extracellular domain) with SFTPD. In terms of processing, highly glycosylated. Post-translationally, proteolytically cleaved at multiple sites: one in the GPS region of the GAIN-B domain (S1 site) and the other in the SEA domain (S2 site). The proteolytic cleavage at S1 site generates an extracellular subunit and a seven-transmembrane subunit. The proteolytic cleavage at S2 site generates a fragment that undergoes proteolytic cleavage by the processing enzyme furin. In terms of tissue distribution, highly expressed in the lung and to a much lesser extent in the kidney and heart. Dense localization in alveolar walls of the lung and in the intercalated cells of the collecting duct of the kidney.

The protein localises to the cell membrane. Its activity is regulated as follows. As an adhesion G protein-coupled receptor (aGPCR) exhibits a large N-terminal extracellular domain containing highly conserved GPCR autoproteolysis-inducing (GAIN) domain. During synthesis, intracellular autoproteolytic processing of nascent chain within the GAIN domain generates a mature protein, consisting of an N-terminal fragment that is non-covalently linked to the C-terminal fragment. The mature protein is routed to the plasma membrane where the N- and C-terminal fragments remain associated, forming the holoreceptor. Dissociation of the aGPCR fragments stimulates G protein signaling through the action of the tethered-peptide agonist stalk that is occluded within the GAIN domain in the holoreceptor form. This dissociation might be induced by ligand binding, such as that of sFNDC4. In terms of biological role, receptor that plays a critical role in lung surfactant homeostasis. May play a role in controlling adipocyte function. Functionally, adhesion G protein-coupled receptor. In alveolar type II (ATII or AT2) cells, required for normal lung surfactant homeostasis. Modulation of both surfactant secretion and uptake by ATII cells is mediated by the downstream activation of GNAQ/GNA11 proteins and may be a consequence of increased cortical F-actin assembly induced by ADGRF5 activation. In the kidney, may play a role in the regulation of acid excretion into the primary urine, possibly by regulating the surface expression of V-ATPase proton pump. As a receptor for soluble FNDC4 (sFNDC4), required for proper systemic glucose tolerance, specifically sensitizing white adipose tissue to insulin. Also plays a role in sFNDC4-induced decrease of local inflammation in white adipose tissue. The polypeptide is Adhesion G protein-coupled receptor F5 (Adgrf5) (Rattus norvegicus (Rat)).